Here is a 327-residue protein sequence, read N- to C-terminus: Acetaldehyde dehydrogenase 5 (327 aa).

Position 15 to 18 (15 to 18 (SGNI)) interacts with NAD(+). Cys133 acts as the Acyl-thioester intermediate in catalysis. Residues 164 to 172 (SAGPGTRAN) and Asn297 each bind NAD(+).

Belongs to the acetaldehyde dehydrogenase family.

It catalyses the reaction acetaldehyde + NAD(+) + CoA = acetyl-CoA + NADH + H(+). The protein is Acetaldehyde dehydrogenase 5 of Rhodococcus jostii (strain RHA1).